A 121-amino-acid chain; its full sequence is Large ribosomal subunit protein uL14c (121 aa).

Belongs to the universal ribosomal protein uL14 family. In terms of assembly, part of the 50S ribosomal subunit.

The protein localises to the plastid. It is found in the chloroplast. In terms of biological role, binds to 23S rRNA. In Trieres chinensis (Marine centric diatom), this protein is Large ribosomal subunit protein uL14c.